The chain runs to 603 residues: NAD 5'-nucleotidase (603 aa).

The signal sequence occupies residues 1–25 (MLLSKKSASFALSAFAMLFTSVALA). Zn(2+) contacts are provided by Asp-44, His-46, Asp-94, Asn-126, and His-227. Substrate-binding positions include Arg-397, Arg-437, Phe-456, and 540–546 (YVAGGKD).

The protein belongs to the 5'-nucleotidase family. Zn(2+) serves as cofactor.

The protein resides in the periplasm. It carries out the reaction a ribonucleoside 5'-phosphate + H2O = a ribonucleoside + phosphate. Its function is as follows. Degrades NAD into adenosine and nicotinamide riboside, the latter being subsequently internalized by a specific permease. Also endowed with NAD(P) pyrophosphatase activity. Exhibits a broad substrate specificity, recognizing either mono- or dinucleotide nicotinamides and different adenosine phosphates with a maximal activity on 5'-adenosine monophosphate. This chain is NAD 5'-nucleotidase, found in Haemophilus influenzae (strain ATCC 51907 / DSM 11121 / KW20 / Rd).